A 53-amino-acid chain; its full sequence is Small polypeptide DEVIL 7 (53 aa).

Positions 1–16 (MREKYTKEEAVKNWEK) are enriched in basic and acidic residues. A disordered region spans residues 1 to 28 (MREKYTKEEAVKNWEKKKNKPSSPKGVG). A required for DVL/RTFL small polypeptide activity region spans residues 22 to 53 (SSPKGVGEFLKKKKGRFYIIGKCITMLLCSHK). The helical transmembrane segment at 30-46 (FLKKKKGRFYIIGKCIT) threads the bilayer.

The protein belongs to the DVL/RTFL small polypeptides family.

Its subcellular location is the cell membrane. Functionally, small polypeptide acting as a regulatory molecule which coordinates cellular responses required for differentiation, growth and development, probably by restricting polar cell proliferation in lateral organs and coordinating socket cell recruitment and differentiation at trichome sites. This chain is Small polypeptide DEVIL 7, found in Arabidopsis thaliana (Mouse-ear cress).